The following is a 253-amino-acid chain: Negative modulator of initiation of replication (253 aa).

The disordered stretch occupies residues 66–112 (SNQEQQTGHGHAGEPSAVQTPESNDYAKAQPHSSGYQPGQLEGHKSE). The segment at 154-155 (AV) is interaction with DNA.

Belongs to the SeqA family. In terms of assembly, homodimer. Polymerizes to form helical filaments.

The protein localises to the cytoplasm. Negative regulator of replication initiation, which contributes to regulation of DNA replication and ensures that replication initiation occurs exactly once per chromosome per cell cycle. Binds to pairs of hemimethylated GATC sequences in the oriC region, thus preventing assembly of replication proteins and re-initiation at newly replicated origins. Repression is relieved when the region becomes fully methylated. The sequence is that of Negative modulator of initiation of replication from Shewanella denitrificans (strain OS217 / ATCC BAA-1090 / DSM 15013).